The primary structure comprises 155 residues: uncharacterized protein (155 aa).

Transmembrane regions (helical) follow at residues 25 to 45, 50 to 70, 91 to 111, and 118 to 138; these read LPMG…FGWT, IFWF…IMTS, GVKI…ESLF, and WGCT…PILF.

The protein belongs to the major facilitator superfamily. CAR1 family.

The protein resides in the membrane. This is an uncharacterized protein from Schizosaccharomyces pombe (strain 972 / ATCC 24843) (Fission yeast).